The chain runs to 281 residues: Nucleotide-binding protein Daro_0070 (281 aa).

8-15 (GLSGSGKS) contributes to the ATP binding site. 57 to 60 (DARS) lines the GTP pocket.

This sequence belongs to the RapZ-like family.

Displays ATPase and GTPase activities. The sequence is that of Nucleotide-binding protein Daro_0070 from Dechloromonas aromatica (strain RCB).